The primary structure comprises 505 residues: ATP synthase subunit alpha (505 aa).

170-177 serves as a coordination point for ATP; the sequence is GDRQTGKT.

This sequence belongs to the ATPase alpha/beta chains family. As to quaternary structure, F-type ATPases have 2 components, CF(1) - the catalytic core - and CF(0) - the membrane proton channel. CF(1) has five subunits: alpha(3), beta(3), gamma(1), delta(1), epsilon(1). CF(0) has four main subunits: a(1), b(1), b'(1) and c(9-12).

It localises to the cellular thylakoid membrane. The catalysed reaction is ATP + H2O + 4 H(+)(in) = ADP + phosphate + 5 H(+)(out). In terms of biological role, produces ATP from ADP in the presence of a proton gradient across the membrane. The alpha chain is a regulatory subunit. The sequence is that of ATP synthase subunit alpha from Synechococcus sp. (strain RCC307).